Here is a 347-residue protein sequence, read N- to C-terminus: NADH-ubiquinone oxidoreductase chain 2 (347 aa).

The next 10 membrane-spanning stretches (helical) occupy residues 1 to 21 (MNPL…AIVA), 25 to 45 (HWLM…PILM), 59 to 79 (YFLT…MNLV), 111 to 131 (FHFW…LILL), 149 to 169 (INLD…GWGG), 178 to 198 (IMAY…TYNP), 201 to 221 (TLLN…MFML), 237 to 257 (MPLL…LPPL), 274 to 294 (NSVI…YFYM), and 326 to 346 (LSPL…LALL).

Belongs to the complex I subunit 2 family. As to quaternary structure, core subunit of respiratory chain NADH dehydrogenase (Complex I) which is composed of 45 different subunits. Interacts with TMEM242.

It is found in the mitochondrion inner membrane. It catalyses the reaction a ubiquinone + NADH + 5 H(+)(in) = a ubiquinol + NAD(+) + 4 H(+)(out). Its function is as follows. Core subunit of the mitochondrial membrane respiratory chain NADH dehydrogenase (Complex I) which catalyzes electron transfer from NADH through the respiratory chain, using ubiquinone as an electron acceptor. Essential for the catalytic activity and assembly of complex I. The sequence is that of NADH-ubiquinone oxidoreductase chain 2 from Pteropus rodricensis (Rodriguez flying fox).